We begin with the raw amino-acid sequence, 494 residues long: Inosine-5'-monophosphate dehydrogenase (494 aa).

CBS domains follow at residues 93-154 (IIRN…NEKI) and 158-217 (MTTD…CKDM). NAD(+) is bound by residues D251 and 301 to 303 (GIG). K(+)-binding residues include G303 and G305. S306 contributes to the IMP binding site. C308 is a K(+) binding site. C308 acts as the Thioimidate intermediate in catalysis. IMP is bound by residues 341 to 343 (DGG), 364 to 365 (GS), and 388 to 392 (YRGMG). Residue R406 is the Proton acceptor of the active site. An IMP-binding site is contributed by E421. K(+) contacts are provided by E475, S476, and H477.

It belongs to the IMPDH/GMPR family. As to quaternary structure, homotetramer. It depends on K(+) as a cofactor.

The enzyme catalyses IMP + NAD(+) + H2O = XMP + NADH + H(+). Its pathway is purine metabolism; XMP biosynthesis via de novo pathway; XMP from IMP: step 1/1. Mycophenolic acid (MPA) is a non-competitive inhibitor that prevents formation of the closed enzyme conformation by binding to the same site as the amobile flap. In contrast, mizoribine monophosphate (MZP) is a competitive inhibitor that induces the closed conformation. MPA is a potent inhibitor of mammalian IMPDHs but a poor inhibitor of the bacterial enzymes. MZP is a more potent inhibitor of bacterial IMPDH. Its function is as follows. Catalyzes the conversion of inosine 5'-phosphate (IMP) to xanthosine 5'-phosphate (XMP), the first committed and rate-limiting step in the de novo synthesis of guanine nucleotides, and therefore plays an important role in the regulation of cell growth. In Chlorobaculum parvum (strain DSM 263 / NCIMB 8327) (Chlorobium vibrioforme subsp. thiosulfatophilum), this protein is Inosine-5'-monophosphate dehydrogenase.